Consider the following 425-residue polypeptide: Serine--tRNA ligase (425 aa).

230-232 (TAE) contributes to the L-serine binding site. 261 to 263 (RSE) serves as a coordination point for ATP. Glu284 is an L-serine binding site. 348 to 351 (EISS) provides a ligand contact to ATP. Position 384 (Ser384) interacts with L-serine.

This sequence belongs to the class-II aminoacyl-tRNA synthetase family. Type-1 seryl-tRNA synthetase subfamily. In terms of assembly, homodimer. The tRNA molecule binds across the dimer.

The protein localises to the cytoplasm. It catalyses the reaction tRNA(Ser) + L-serine + ATP = L-seryl-tRNA(Ser) + AMP + diphosphate + H(+). It carries out the reaction tRNA(Sec) + L-serine + ATP = L-seryl-tRNA(Sec) + AMP + diphosphate + H(+). It participates in aminoacyl-tRNA biosynthesis; selenocysteinyl-tRNA(Sec) biosynthesis; L-seryl-tRNA(Sec) from L-serine and tRNA(Sec): step 1/1. In terms of biological role, catalyzes the attachment of serine to tRNA(Ser). Is also able to aminoacylate tRNA(Sec) with serine, to form the misacylated tRNA L-seryl-tRNA(Sec), which will be further converted into selenocysteinyl-tRNA(Sec). This Streptococcus thermophilus (strain ATCC BAA-491 / LMD-9) protein is Serine--tRNA ligase.